A 916-amino-acid chain; its full sequence is DNA ligase 1 (916 aa).

Residues 1-10 (MQRSIMSFFQ) are compositionally biased toward polar residues. The tract at residues 1–197 (MQRSIMSFFQ…SPESVTLTKT (197 aa)) is disordered. Positions 13–43 (KEGKAKKPEKETPSSIREKEPPPKVALKERN) are enriched in basic and acidic residues. 3 positions are modified to phosphoserine: S49, S51, and S65. The residue at position 77 (T77) is a Phosphothreonine. A compositionally biased stretch (polar residues) spans 99–111 (PENSPVFNCSSPM). The segment covering 119–129 (PKRRTARKQLP) has biased composition (basic residues). Position 144 is an N6-acetyllysine (K144). Basic and acidic residues predominate over residues 153 to 177 (KEEETPKESLAEAEDIKQKEEKEGD). Positions 185-197 (PTKSPESVTLTKT) are enriched in polar residues. A Phosphothreonine modification is found at T193. At K225 the chain carries N6-acetyllysine. Residues S228 and S229 each carry the phosphoserine modification. Residue T232 is modified to Phosphothreonine. Residues 236 to 266 (PAVKTEVKQEESGTLRKEETKGTLDPANYNP) form a disordered region. Residues 238-257 (VKTEVKQEESGTLRKEETKG) are compositionally biased toward basic and acidic residues. The segment at 447 to 456 (RLRLGLAEQS) is interaction with target DNA. E564 is a binding site for ATP. K566 (N6-AMP-lysine intermediate) is an active-site residue. R571 and E619 together coordinate ATP. Residue E619 coordinates Mg(2+). Residues 640–642 (KRK) form an interaction with target DNA region. E718 lines the Mg(2+) pocket. Residues K723 and K742 each contribute to the ATP site. Phosphothreonine is present on T796. Phosphoserine occurs at positions 799, 906, 907, and 911. A disordered region spans residues 879 to 916 (DKQPEQATTSNQVASLYRKQSQIQNQQSSDLDSDVEDY). The segment covering 883–908 (EQATTSNQVASLYRKQSQIQNQQSSD) has biased composition (polar residues).

This sequence belongs to the ATP-dependent DNA ligase family. As to quaternary structure, interacts with PCNA. Interacts with POLB. The cofactor is Mg(2+).

It is found in the nucleus. The enzyme catalyses ATP + (deoxyribonucleotide)n-3'-hydroxyl + 5'-phospho-(deoxyribonucleotide)m = (deoxyribonucleotide)n+m + AMP + diphosphate.. Functionally, DNA ligase that seals nicks in double-stranded during DNA repair. Also involved in DNA replication and DNA recombination. The chain is DNA ligase 1 (Lig1) from Mus musculus (Mouse).